A 155-amino-acid polypeptide reads, in one-letter code: Arginine repressor (155 aa).

The protein belongs to the ArgR family.

The protein localises to the cytoplasm. The protein operates within amino-acid biosynthesis; L-arginine biosynthesis [regulation]. Functionally, regulates arginine biosynthesis genes. This chain is Arginine repressor, found in Histophilus somni (strain 2336) (Haemophilus somnus).